Reading from the N-terminus, the 173-residue chain is NADH-quinone oxidoreductase subunit B 2 (173 aa).

[4Fe-4S] cluster-binding residues include cysteine 42, cysteine 43, cysteine 107, and cysteine 137.

It belongs to the complex I 20 kDa subunit family. As to quaternary structure, NDH-1 is composed of 14 different subunits. Subunits NuoB, C, D, E, F, and G constitute the peripheral sector of the complex. It depends on [4Fe-4S] cluster as a cofactor.

Its subcellular location is the cell inner membrane. It catalyses the reaction a quinone + NADH + 5 H(+)(in) = a quinol + NAD(+) + 4 H(+)(out). Its function is as follows. NDH-1 shuttles electrons from NADH, via FMN and iron-sulfur (Fe-S) centers, to quinones in the respiratory chain. Couples the redox reaction to proton translocation (for every two electrons transferred, four hydrogen ions are translocated across the cytoplasmic membrane), and thus conserves the redox energy in a proton gradient. The sequence is that of NADH-quinone oxidoreductase subunit B 2 from Anaeromyxobacter dehalogenans (strain 2CP-C).